The primary structure comprises 583 residues: MILRYLIFFAQLWALCLANVNMFISKEEMNRTFGVKAELNYIEMGNVSSYSTKFHYRVMANIDYLSFTWNAVGIVHYEVYVESDDSSVLPIVRIPLKGTVPESLQDFTVEYRCAGHRSGQFAVSLYFTFKYGNKEPLKVKLRQEKICASRDGRRGLNGGYEGHEVDDTDSIDKAFFVIICIAAAFLLIVAATLICYFKRSKKEDMIPTRLPTSFRNSLKSTKSAQPFLLSTPRDGPPTLSAISSAPCSSSSASGNSIIPSKPRNIDVRRALLQLYQDRDAFQSLPLDMEGTFGEVRYAIWRQVDDVLNGDVDDEEDTFCNQEAVYTKTLKNNASPIQLDRFLSDALLFYNITPHQNLSQVACVASFGRFDRPETVTDFPLVCYRHQGFGNLKKFLTICRHGDKTKGAQTLRTHQLVSLATQVSSAVAHIHKYRIVHNDIAARNCLIAEVNGRLQVQLCDSALSRDLFPADYHCLGDNENRPLKWMSPEAIANELYSSAADVWSLGVLLWELMSLGGSPHAEIDPEEVYTMILKGKRLQQPNNCPDQLYEVMLCCWRVLSEDRPSSEQVVHGLRDFNIQLSQYI.

The first 18 residues, 1 to 18 (MILRYLIFFAQLWALCLA), serve as a signal peptide directing secretion. Topologically, residues 19–173 (NVNMFISKEE…EVDDTDSIDK (155 aa)) are extracellular. Positions 22–147 (MFISKEEMNR…KVKLRQEKIC (126 aa)) constitute a WIF domain. 2 N-linked (GlcNAc...) asparagine glycosylation sites follow: Asn-30 and Asn-46. Cys-113 and Cys-147 are joined by a disulfide. A helical membrane pass occupies residues 174 to 194 (AFFVIICIAAAFLLIVAATLI). The Cytoplasmic segment spans residues 195–583 (CYFKRSKKED…DFNIQLSQYI (389 aa)). In terms of domain architecture, Protein kinase spans 281–583 (FQSLPLDMEG…DFNIQLSQYI (303 aa)). ATP is bound by residues 287-295 (DMEGTFGEV) and Lys-327.

This sequence belongs to the protein kinase superfamily. Tyr protein kinase family.

The protein resides in the cell membrane. It is found in the basolateral cell membrane. Has no detectable kinase activity in vitro and is unlikely to function as a tyrosine kinase in vivo. Receptor which may act as a receptor for Wnt ligand mom-2. Plays a role in controlling P7.p vulva precursor cell lineage orientation during vulva development. Regulates pop-1 asymmetric distribution in P7.p and its daughter cells. Plays a role in the migration of ALM neurons during embryogenesis. The polypeptide is Inactive tyrosine-protein kinase RYK (Caenorhabditis elegans).